A 130-amino-acid polypeptide reads, in one-letter code: Small ribosomal subunit protein uS11 (130 aa).

The disordered stretch occupies residues 109–130; sequence EDVTPIPHDGTGRPGGKRGRRV.

Belongs to the universal ribosomal protein uS11 family. Part of the 30S ribosomal subunit.

Its function is as follows. Located on the platform of the 30S subunit. This is Small ribosomal subunit protein uS11 from Methanosphaera stadtmanae (strain ATCC 43021 / DSM 3091 / JCM 11832 / MCB-3).